The chain runs to 338 residues: RNA 3'-terminal phosphate cyclase (338 aa).

Residues glutamine 103 and 283 to 287 (YLADQ) contribute to the ATP site. Histidine 308 (tele-AMP-histidine intermediate) is an active-site residue.

Belongs to the RNA 3'-terminal cyclase family. Type 1 subfamily.

It is found in the cytoplasm. It catalyses the reaction a 3'-end 3'-phospho-ribonucleotide-RNA + ATP = a 3'-end 2',3'-cyclophospho-ribonucleotide-RNA + AMP + diphosphate. Catalyzes the conversion of 3'-phosphate to a 2',3'-cyclic phosphodiester at the end of RNA. The mechanism of action of the enzyme occurs in 3 steps: (A) adenylation of the enzyme by ATP; (B) transfer of adenylate to an RNA-N3'P to produce RNA-N3'PP5'A; (C) and attack of the adjacent 2'-hydroxyl on the 3'-phosphorus in the diester linkage to produce the cyclic end product. The biological role of this enzyme is unknown but it is likely to function in some aspects of cellular RNA processing. In Escherichia coli O7:K1 (strain IAI39 / ExPEC), this protein is RNA 3'-terminal phosphate cyclase.